A 165-amino-acid polypeptide reads, in one-letter code: Protein SprT (165 aa).

Positions 22–163 (LAQANLKLGC…RCVHCGEQLV (142 aa)) constitute a SprT-like domain. Residue His-78 coordinates Zn(2+). Glu-79 is a catalytic residue. His-82 serves as a coordination point for Zn(2+).

This sequence belongs to the SprT family. Zn(2+) serves as cofactor.

It is found in the cytoplasm. The polypeptide is Protein SprT (Shigella dysenteriae serotype 1 (strain Sd197)).